The sequence spans 201 residues: FMN-dependent NADH:quinone oxidoreductase (201 aa).

Residues Ser10, Ser16–Ser18, Met96–Phe99, and Ser140–Gly143 contribute to the FMN site.

This sequence belongs to the azoreductase type 1 family. Homodimer. Requires FMN as cofactor.

The enzyme catalyses 2 a quinone + NADH + H(+) = 2 a 1,4-benzosemiquinone + NAD(+). It catalyses the reaction N,N-dimethyl-1,4-phenylenediamine + anthranilate + 2 NAD(+) = 2-(4-dimethylaminophenyl)diazenylbenzoate + 2 NADH + 2 H(+). In terms of biological role, quinone reductase that provides resistance to thiol-specific stress caused by electrophilic quinones. Its function is as follows. Also exhibits azoreductase activity. Catalyzes the reductive cleavage of the azo bond in aromatic azo compounds to the corresponding amines. This is FMN-dependent NADH:quinone oxidoreductase from Shigella boydii serotype 4 (strain Sb227).